The chain runs to 960 residues: Leucine-rich repeat receptor-like serine/threonine-protein kinase SKM1 (960 aa).

A signal peptide spans 1–29; sequence MSTSHHHHHPPYLITTLFFLFLNFSCLHA. The Extracellular portion of the chain corresponds to 30–634; sequence NELELLLSFK…VRKRSTKSWW (605 aa). A disulfide bridge links Cys61 with Cys68. Residues Asn70, Asn83, Asn103, Asn108, Asn129, and Asn134 are each glycosylated (N-linked (GlcNAc...) asparagine). 22 LRR repeats span residues 71 to 96, 97 to 120, 122 to 146, 149 to 168, 169 to 194, 196 to 216, 217 to 240, 241 to 264, 265 to 288, 290 to 312, 313 to 336, 338 to 360, 361 to 384, 386 to 408, 409 to 432, 434 to 454, 455 to 477, 478 to 501, 503 to 525, 526 to 549, 550 to 573, and 575 to 598; these read ISRV…TFRL, PFLQ…IFTT, SPSL…FLPN, TLDL…IGVF, SNLR…NLSR, EFLT…LGKM, KNLK…IGGL, SSLN…LGDL, KKLE…IFSL, NLIS…VAQM, QSLE…VTSL, RLKV…LGKH, NNLT…LCDS, HLTK…LGMC, QSLE…FTKL, LVNF…TWDM, PQLE…FSRS, KRLK…LMTF, EIMD…LSSC, KNLV…FAEF, QVLS…LGNI, and SLVQ…AFLA. An N-linked (GlcNAc...) asparagine glycan is attached at Asn191. The CLE45 peptide binding signature appears at 221–226; sequence WIYLGY. Asn228 and Asn252 each carry an N-linked (GlcNAc...) asparagine glycan. N-linked (GlcNAc...) asparagine glycosylation occurs at Asn324. Residues Asn362 and Asn372 are each glycosylated (N-linked (GlcNAc...) asparagine). Asn537 is a glycosylation site (N-linked (GlcNAc...) asparagine). Residues Asn580 and Asn600 are each glycosylated (N-linked (GlcNAc...) asparagine). Residues 635–655 traverse the membrane as a helical segment; that stretch reads LIITSTFAAFLAVLVSGFFIV. Over 656–960 the chain is Cytoplasmic; sequence LVFQRTHNVL…TYLSKILSLA (305 aa). The Protein kinase domain occupies 691–953; the sequence is FTVNTILSSL…SSSSSCTTYL (263 aa). Thr692 carries the phosphothreonine modification. ATP is bound by residues 697-705 and Lys717; that span reads LSSLKDQNV. At Tyr834 the chain carries Phosphotyrosine.

It belongs to the protein kinase superfamily. Ser/Thr protein kinase family. As to quaternary structure, self-interacts. Binds to CLE45 present in the pistil, particularly under relatively high temperature (at 30 degrees Celsius). As to expression, expressed in pollen grains and roots vascular tissues. Present in roots.

It localises to the cell membrane. It carries out the reaction L-seryl-[protein] + ATP = O-phospho-L-seryl-[protein] + ADP + H(+). The enzyme catalyses L-threonyl-[protein] + ATP = O-phospho-L-threonyl-[protein] + ADP + H(+). Its function is as follows. Receptor with a serine/threonine-protein kinase activity. Together with SKM2, LRR-rich receptor-like kinase (LRR-RLK) required for male fertility by the perception of CLE43 and CLE45 peptides and the transduction of their promoting action in pollen tubes, especially under relatively high temperature (at 30 degrees Celsius), thus conferring tolerance against high temperature probably through the maintenance of mitochondrial activity. Seems to not be involved in the perception of CLE45 peptide in roots. The polypeptide is Leucine-rich repeat receptor-like serine/threonine-protein kinase SKM1 (Arabidopsis thaliana (Mouse-ear cress)).